We begin with the raw amino-acid sequence, 145 residues long: METLLSFDEIKKIIPHRYPFLLIDRITELEEGKRCTGIKQVSGNEPFFQGHFPEYAVMPGVLIVEALAQVGAVAMLKLEENQGKLAMFTGIDKCRFKSQVTPGDTLTLSVEMTRVKGPIGKGTATAKVGDKLACSCEISFAIIEK.

Residue His-51 is part of the active site.

This sequence belongs to the thioester dehydratase family. FabZ subfamily.

It is found in the cytoplasm. The catalysed reaction is a (3R)-hydroxyacyl-[ACP] = a (2E)-enoyl-[ACP] + H2O. Functionally, involved in unsaturated fatty acids biosynthesis. Catalyzes the dehydration of short chain beta-hydroxyacyl-ACPs and long chain saturated and unsaturated beta-hydroxyacyl-ACPs. In Macrococcus caseolyticus (strain JCSC5402) (Macrococcoides caseolyticum), this protein is 3-hydroxyacyl-[acyl-carrier-protein] dehydratase FabZ.